Reading from the N-terminus, the 201-residue chain is Xanthine phosphoribosyltransferase (201 aa).

Residues L20 and N27 each contribute to the xanthine site. Residue 129–133 (ANGQA) participates in 5-phospho-alpha-D-ribose 1-diphosphate binding. Residue K157 participates in xanthine binding.

Belongs to the purine/pyrimidine phosphoribosyltransferase family. Xpt subfamily. In terms of assembly, homodimer.

It localises to the cytoplasm. It catalyses the reaction XMP + diphosphate = xanthine + 5-phospho-alpha-D-ribose 1-diphosphate. It functions in the pathway purine metabolism; XMP biosynthesis via salvage pathway; XMP from xanthine: step 1/1. Functionally, converts the preformed base xanthine, a product of nucleic acid breakdown, to xanthosine 5'-monophosphate (XMP), so it can be reused for RNA or DNA synthesis. This Shouchella clausii (strain KSM-K16) (Alkalihalobacillus clausii) protein is Xanthine phosphoribosyltransferase.